The following is a 433-amino-acid chain: Urokinase-type plasminogen activator (433 aa).

A signal peptide spans 1 to 20; sequence MRALLAHLLLCVLVVSASKG. The region spanning 26-62 is the EGF-like domain; it reads VPSDCGCLNGGTCMSNKYFSSIHWCNCPKKFGGQHCE. Intrachain disulfides connect C30–C38, C32–C50, C52–C61, C69–C150, C90–C132, and C121–C145. Residues 33–56 form a binds urokinase plasminogen activator surface receptor region; the sequence is LNGGTCMSNKYFSSIHWCNCPKKF. One can recognise a Kringle domain in the interval 69-150; sequence CYEGNGHFYR…RVQECMVHNC (82 aa). Residues 151–177 form a connecting peptide region; sequence ADGKKPSSPPEELQFQCGQRTLRPRFK. Residue S157 is modified to Phosphoserine. Intrachain disulfides connect C167–C298, C208–C224, C216–C287, C315–C384, C347–C363, and C374–C402. A Peptidase S1 domain is found at 178-426; that stretch reads IVGGEFTTIE…FLPWIHSHTR (249 aa). Catalysis depends on charge relay system residues H223 and D274. N324 carries an N-linked (GlcNAc...) asparagine glycan. S325 bears the Phosphoserine mark. Catalysis depends on S378, which acts as the Charge relay system.

It belongs to the peptidase S1 family. As to quaternary structure, found in high and low molecular mass forms. Each consists of two chains, A and B. The high molecular mass form contains a long chain A which is cleaved to yield a short chain A. Forms heterodimer with SERPINA5. Binds LRP1B; binding is followed by internalization and degradation. Interacts with MRC2. Interacts with PLAUR. In complex with SERPINE1, interacts with PLAUR/uPAR. Interacts with SORL1 and LRP1, either alone or in complex with SERPINE1; these interactions are abolished in the presence of LRPAP1/RAP. The ternary complex composed of PLAUR-PLAU-PAI1 also interacts with SORLA. Post-translationally, phosphorylation of Ser-157 and Ser-325 abolishes proadhesive ability but does not interfere with receptor binding. In terms of processing, produced as an inactive single-chain protein (pro-uPA or sc-uPA), is processed into the active disulfide-linked two-chain form of PLAU/uPA by a proteolytic event mediated, at least, by TMPRSS4.

Its subcellular location is the secreted. It carries out the reaction Specific cleavage of Arg-|-Val bond in plasminogen to form plasmin.. With respect to regulation, inhibited by SERPINA5. Inhibited by SERPINE1. Its function is as follows. Specifically cleaves the zymogen plasminogen to form the active enzyme plasmin. The chain is Urokinase-type plasminogen activator (PLAU) from Papio cynocephalus (Yellow baboon).